The primary structure comprises 554 residues: Aspartyl/glutamyl-tRNA(Asn/Gln) amidotransferase subunit B (554 aa).

Residues 491–554 (AEQPTAPPPE…TPVSHQDAHA (64 aa)) are disordered. Residues 502-540 (ESAAETPEAPPAVEDAPPEAPTEAITAEAGSAEAITAAS) show a composition bias toward low complexity.

It belongs to the GatB/GatE family. GatB subfamily. In terms of assembly, heterotrimer of A, B and C subunits.

It carries out the reaction L-glutamyl-tRNA(Gln) + L-glutamine + ATP + H2O = L-glutaminyl-tRNA(Gln) + L-glutamate + ADP + phosphate + H(+). The catalysed reaction is L-aspartyl-tRNA(Asn) + L-glutamine + ATP + H2O = L-asparaginyl-tRNA(Asn) + L-glutamate + ADP + phosphate + 2 H(+). In terms of biological role, allows the formation of correctly charged Asn-tRNA(Asn) or Gln-tRNA(Gln) through the transamidation of misacylated Asp-tRNA(Asn) or Glu-tRNA(Gln) in organisms which lack either or both of asparaginyl-tRNA or glutaminyl-tRNA synthetases. The reaction takes place in the presence of glutamine and ATP through an activated phospho-Asp-tRNA(Asn) or phospho-Glu-tRNA(Gln). The chain is Aspartyl/glutamyl-tRNA(Asn/Gln) amidotransferase subunit B from Gloeobacter violaceus (strain ATCC 29082 / PCC 7421).